A 322-amino-acid polypeptide reads, in one-letter code: Phosphatidylserine decarboxylase proenzyme (322 aa).

Active-site charge relay system; for autoendoproteolytic cleavage activity residues include D90, H147, and S254. The active-site Schiff-base intermediate with substrate; via pyruvic acid; for decarboxylase activity is the S254. The residue at position 254 (S254) is a Pyruvic acid (Ser); by autocatalysis. The disordered stretch occupies residues 293–322 (PDAEPAPLPAEEIEAEHDASPLVDDKKDQV). Positions 308–322 (EHDASPLVDDKKDQV) are enriched in basic and acidic residues.

This sequence belongs to the phosphatidylserine decarboxylase family. PSD-B subfamily. Prokaryotic type I sub-subfamily. In terms of assembly, heterodimer of a large membrane-associated beta subunit and a small pyruvoyl-containing alpha subunit. It depends on pyruvate as a cofactor. Is synthesized initially as an inactive proenzyme. Formation of the active enzyme involves a self-maturation process in which the active site pyruvoyl group is generated from an internal serine residue via an autocatalytic post-translational modification. Two non-identical subunits are generated from the proenzyme in this reaction, and the pyruvate is formed at the N-terminus of the alpha chain, which is derived from the carboxyl end of the proenzyme. The autoendoproteolytic cleavage occurs by a canonical serine protease mechanism, in which the side chain hydroxyl group of the serine supplies its oxygen atom to form the C-terminus of the beta chain, while the remainder of the serine residue undergoes an oxidative deamination to produce ammonia and the pyruvoyl prosthetic group on the alpha chain. During this reaction, the Ser that is part of the protease active site of the proenzyme becomes the pyruvoyl prosthetic group, which constitutes an essential element of the active site of the mature decarboxylase.

The protein localises to the cell membrane. It catalyses the reaction a 1,2-diacyl-sn-glycero-3-phospho-L-serine + H(+) = a 1,2-diacyl-sn-glycero-3-phosphoethanolamine + CO2. The protein operates within phospholipid metabolism; phosphatidylethanolamine biosynthesis; phosphatidylethanolamine from CDP-diacylglycerol: step 2/2. In terms of biological role, catalyzes the formation of phosphatidylethanolamine (PtdEtn) from phosphatidylserine (PtdSer). The protein is Phosphatidylserine decarboxylase proenzyme of Escherichia coli (strain 55989 / EAEC).